We begin with the raw amino-acid sequence, 74 residues long: uncharacterized protein (74 aa).

It is found in the mitochondrion. This is an uncharacterized protein from Marchantia polymorpha (Common liverwort).